A 720-amino-acid polypeptide reads, in one-letter code: Putative fatty acid oxidation complex trifunctional enzyme (720 aa).

The 3-hydroxyacyl-CoA dehydrogenase stretch occupies residues 1–384; the sequence is MQNEIKKVCV…SWHYGPFELL (384 aa). An enoyl-CoA hydratase/isomerase region spans residues 453-720; it reads FVITTKMNSL…TIEKLQAIVG (268 aa).

The protein in the N-terminal section; belongs to the 3-hydroxyacyl-CoA dehydrogenase family. It in the C-terminal section; belongs to the enoyl-CoA hydratase/isomerase family.

It catalyses the reaction a (3S)-3-hydroxyacyl-CoA + NAD(+) = a 3-oxoacyl-CoA + NADH + H(+). The enzyme catalyses a (3S)-3-hydroxyacyl-CoA = a (2E)-enoyl-CoA + H2O. The catalysed reaction is a 4-saturated-(3S)-3-hydroxyacyl-CoA = a (3E)-enoyl-CoA + H2O. It carries out the reaction a (3Z)-enoyl-CoA = a 4-saturated (2E)-enoyl-CoA. It catalyses the reaction a (3E)-enoyl-CoA = a 4-saturated (2E)-enoyl-CoA. The protein is Putative fatty acid oxidation complex trifunctional enzyme of Rickettsia prowazekii (strain Madrid E).